The chain runs to 313 residues: Aspartate carbamoyltransferase catalytic subunit (313 aa).

Residues Arg-58 and Thr-59 each contribute to the carbamoyl phosphate site. Lys-86 is an L-aspartate binding site. Residues Arg-108, His-136, and Gln-139 each coordinate carbamoyl phosphate. 2 residues coordinate L-aspartate: Arg-169 and Arg-223. Carbamoyl phosphate-binding residues include Gly-265 and Pro-266.

This sequence belongs to the aspartate/ornithine carbamoyltransferase superfamily. ATCase family. As to quaternary structure, heterododecamer (2C3:3R2) of six catalytic PyrB chains organized as two trimers (C3), and six regulatory PyrI chains organized as three dimers (R2).

It carries out the reaction carbamoyl phosphate + L-aspartate = N-carbamoyl-L-aspartate + phosphate + H(+). Its pathway is pyrimidine metabolism; UMP biosynthesis via de novo pathway; (S)-dihydroorotate from bicarbonate: step 2/3. Catalyzes the condensation of carbamoyl phosphate and aspartate to form carbamoyl aspartate and inorganic phosphate, the committed step in the de novo pyrimidine nucleotide biosynthesis pathway. This chain is Aspartate carbamoyltransferase catalytic subunit, found in Anaeromyxobacter dehalogenans (strain 2CP-1 / ATCC BAA-258).